We begin with the raw amino-acid sequence, 66 residues long: Large ribosomal subunit protein uL29 (66 aa).

It belongs to the universal ribosomal protein uL29 family.

This Helicobacter pylori (strain J99 / ATCC 700824) (Campylobacter pylori J99) protein is Large ribosomal subunit protein uL29 (rpmC).